Reading from the N-terminus, the 180-residue chain is Minor allergen Can f 2 (180 aa).

Residues 1–18 (MQLLLLTVGLALICGLQA) form the signal peptide. Asn45 carries N-linked (GlcNAc...) asparagine glycosylation. Residues Cys82 and Cys175 are joined by a disulfide bond.

It belongs to the calycin superfamily. Lipocalin family. As to expression, tongue epithelial tissue and parotid gland.

The protein resides in the secreted. This chain is Minor allergen Can f 2, found in Canis lupus familiaris (Dog).